We begin with the raw amino-acid sequence, 631 residues long: Phosphomethylpyrimidine synthase (631 aa).

Substrate-binding positions include Asn239, Met268, Tyr297, His333, 353 to 355 (SRG), 394 to 397 (DGLR), and Glu433. Residue His437 participates in Zn(2+) binding. Residue Tyr460 participates in substrate binding. His501 lines the Zn(2+) pocket. [4Fe-4S] cluster-binding residues include Cys581, Cys584, and Cys589.

The protein belongs to the ThiC family. In terms of assembly, homodimer. The cofactor is [4Fe-4S] cluster.

The catalysed reaction is 5-amino-1-(5-phospho-beta-D-ribosyl)imidazole + S-adenosyl-L-methionine = 4-amino-2-methyl-5-(phosphooxymethyl)pyrimidine + CO + 5'-deoxyadenosine + formate + L-methionine + 3 H(+). It functions in the pathway cofactor biosynthesis; thiamine diphosphate biosynthesis. In terms of biological role, catalyzes the synthesis of the hydroxymethylpyrimidine phosphate (HMP-P) moiety of thiamine from aminoimidazole ribotide (AIR) in a radical S-adenosyl-L-methionine (SAM)-dependent reaction. In Escherichia coli O127:H6 (strain E2348/69 / EPEC), this protein is Phosphomethylpyrimidine synthase.